A 304-amino-acid polypeptide reads, in one-letter code: tRNA pseudouridine synthase B (304 aa).

The Nucleophile role is filled by Asp-40.

This sequence belongs to the pseudouridine synthase TruB family. Type 1 subfamily.

It carries out the reaction uridine(55) in tRNA = pseudouridine(55) in tRNA. Responsible for synthesis of pseudouridine from uracil-55 in the psi GC loop of transfer RNAs. This Halalkalibacterium halodurans (strain ATCC BAA-125 / DSM 18197 / FERM 7344 / JCM 9153 / C-125) (Bacillus halodurans) protein is tRNA pseudouridine synthase B.